The following is a 129-amino-acid chain: Phosphoribosyl-AMP cyclohydrolase (129 aa).

Residue D86 coordinates Mg(2+). Residue C87 participates in Zn(2+) binding. Residues D88 and D90 each coordinate Mg(2+). Residues C104 and C111 each coordinate Zn(2+).

The protein belongs to the PRA-CH family. Homodimer. Mg(2+) serves as cofactor. Zn(2+) is required as a cofactor.

It localises to the cytoplasm. It catalyses the reaction 1-(5-phospho-beta-D-ribosyl)-5'-AMP + H2O = 1-(5-phospho-beta-D-ribosyl)-5-[(5-phospho-beta-D-ribosylamino)methylideneamino]imidazole-4-carboxamide. The protein operates within amino-acid biosynthesis; L-histidine biosynthesis; L-histidine from 5-phospho-alpha-D-ribose 1-diphosphate: step 3/9. Its function is as follows. Catalyzes the hydrolysis of the adenine ring of phosphoribosyl-AMP. This chain is Phosphoribosyl-AMP cyclohydrolase, found in Ignicoccus hospitalis (strain KIN4/I / DSM 18386 / JCM 14125).